Consider the following 264-residue polypeptide: Hydroxyethylthiazole kinase (264 aa).

Met-47 serves as a coordination point for substrate. 2 residues coordinate ATP: Arg-123 and Ser-169. Gly-196 lines the substrate pocket.

This sequence belongs to the Thz kinase family. Mg(2+) serves as cofactor.

The enzyme catalyses 5-(2-hydroxyethyl)-4-methylthiazole + ATP = 4-methyl-5-(2-phosphooxyethyl)-thiazole + ADP + H(+). It participates in cofactor biosynthesis; thiamine diphosphate biosynthesis; 4-methyl-5-(2-phosphoethyl)-thiazole from 5-(2-hydroxyethyl)-4-methylthiazole: step 1/1. Catalyzes the phosphorylation of the hydroxyl group of 4-methyl-5-beta-hydroxyethylthiazole (THZ). This chain is Hydroxyethylthiazole kinase, found in Brachyspira hyodysenteriae (strain ATCC 49526 / WA1).